The chain runs to 445 residues: Transcriptional enhancer factor TEF-4 (445 aa).

Disordered regions lie at residues 1 to 47 (MGDP…VWSP) and 191 to 217 (PPAS…SPPA). Residues 25–37 (EGTGGSEGVGGDG) are compositionally biased toward gly residues. Residues 38 to 114 (SPDAEGVWSP…QVLARRKSRE (77 aa)) constitute a DNA-binding region (TEA). The tract at residues 172-445 (WNVPDVKPFS…QYHIYRLVRD (274 aa)) is transcriptional activation. Residues 199 to 216 (YEPPPALSPLPPPAPSPP) show a composition bias toward pro residues.

Interacts with YAP1 and WWTR1/TAZ. As to expression, highest expression in brain. High levels also found in lung, testis and ovarian follicle cells. Lower levels in heart and spleen.

It localises to the nucleus. Transcription factor which plays a key role in the Hippo signaling pathway, a pathway involved in organ size control and tumor suppression by restricting proliferation and promoting apoptosis. The core of this pathway is composed of a kinase cascade wherein MST1/MST2, in complex with its regulatory protein SAV1, phosphorylates and activates LATS1/2 in complex with its regulatory protein MOB1, which in turn phosphorylates and inactivates YAP1 oncoprotein and WWTR1/TAZ. Acts by mediating gene expression of YAP1 and WWTR1/TAZ, thereby regulating cell proliferation, migration and epithelial mesenchymal transition (EMT) induction. Binds to the SPH and GT-IIC 'enhansons' (5'-GTGGAATGT-3'). May be involved in the gene regulation of neural development. Binds to the M-CAT motif. In Mus musculus (Mouse), this protein is Transcriptional enhancer factor TEF-4 (Tead2).